A 442-amino-acid polypeptide reads, in one-letter code: Chromosomal replication initiator protein DnaA (442 aa).

The domain I, interacts with DnaA modulators stretch occupies residues 1–75 (MDAWPRCLER…GNGEVALAVG (75 aa)). The domain II stretch occupies residues 75–104 (GSRPRAPEPAPAAAAVPSAPQAAPMVPFAG). A domain III, AAA+ region region spans residues 105–322 (NLDSHYTFAN…GALNTLVARA (218 aa)). Positions 150, 152, 153, and 154 each coordinate ATP. The domain IV, binds dsDNA stretch occupies residues 323–442 (NFTGRSITVE…WEKLIRKLSE (120 aa)).

It belongs to the DnaA family. As to quaternary structure, oligomerizes as a right-handed, spiral filament on DNA at oriC.

Its subcellular location is the cytoplasm. Its function is as follows. Plays an essential role in the initiation and regulation of chromosomal replication. ATP-DnaA binds to the origin of replication (oriC) to initiate formation of the DNA replication initiation complex once per cell cycle. Binds the DnaA box (a 9 base pair repeat at the origin) and separates the double-stranded (ds)DNA. Forms a right-handed helical filament on oriC DNA; dsDNA binds to the exterior of the filament while single-stranded (ss)DNA is stabiized in the filament's interior. The ATP-DnaA-oriC complex binds and stabilizes one strand of the AT-rich DNA unwinding element (DUE), permitting loading of DNA polymerase. After initiation quickly degrades to an ADP-DnaA complex that is not apt for DNA replication. Binds acidic phospholipids. This Xanthomonas euvesicatoria pv. vesicatoria (strain 85-10) (Xanthomonas campestris pv. vesicatoria) protein is Chromosomal replication initiator protein DnaA.